Consider the following 129-residue polypeptide: Small ribosomal subunit protein uS11 (129 aa).

The protein belongs to the universal ribosomal protein uS11 family. Part of the 30S ribosomal subunit. Interacts with proteins S7 and S18. Binds to IF-3.

Functionally, located on the platform of the 30S subunit, it bridges several disparate RNA helices of the 16S rRNA. Forms part of the Shine-Dalgarno cleft in the 70S ribosome. The sequence is that of Small ribosomal subunit protein uS11 from Yersinia pseudotuberculosis serotype O:1b (strain IP 31758).